Here is a 418-residue protein sequence, read N- to C-terminus: uncharacterized protein (418 aa).

10 helical membrane passes run 51-71 (FVMAVGGIAAIVAQTPIGALV), 79-99 (ALVVAGAVLVTAAAVAMPLFA), 110-130 (VTGIASSVFAPALAAITLGAV), 163-183 (FFGPVVVFWVLAGMALISVLA), 224-244 (VIFGAAVVAFHFANAAMLPLV), 258-278 (ALMSSCIVAAQVVMVPVAYVV), 289-309 (PIFLVGFAVLTARGFLYTLSD), 315-335 (VGVQLLDGIGAGIFGALFPLV), 356-376 (ATGIGAALSNLVAGWIVVVAG), and 379-399 (AAFMSLGALAGAGFLLYLVAM).

Belongs to the major facilitator superfamily.

The protein localises to the cell membrane. This is an uncharacterized protein from Mycobacterium tuberculosis (strain CDC 1551 / Oshkosh).